The primary structure comprises 213 residues: Thiamine-phosphate synthase (213 aa).

4-amino-2-methyl-5-(diphosphooxymethyl)pyrimidine-binding positions include 40 to 44 and Asn75; that span reads QFREK. 2 residues coordinate Mg(2+): Asp76 and Asp95. 4-amino-2-methyl-5-(diphosphooxymethyl)pyrimidine is bound at residue Ser113. 139 to 141 contributes to the 2-[(2R,5Z)-2-carboxy-4-methylthiazol-5(2H)-ylidene]ethyl phosphate binding site; sequence TPS. Lys142 serves as a coordination point for 4-amino-2-methyl-5-(diphosphooxymethyl)pyrimidine. 2-[(2R,5Z)-2-carboxy-4-methylthiazol-5(2H)-ylidene]ethyl phosphate contacts are provided by residues Gly171 and 191-192; that span reads IS.

This sequence belongs to the thiamine-phosphate synthase family. Mg(2+) is required as a cofactor.

It carries out the reaction 2-[(2R,5Z)-2-carboxy-4-methylthiazol-5(2H)-ylidene]ethyl phosphate + 4-amino-2-methyl-5-(diphosphooxymethyl)pyrimidine + 2 H(+) = thiamine phosphate + CO2 + diphosphate. The enzyme catalyses 2-(2-carboxy-4-methylthiazol-5-yl)ethyl phosphate + 4-amino-2-methyl-5-(diphosphooxymethyl)pyrimidine + 2 H(+) = thiamine phosphate + CO2 + diphosphate. It catalyses the reaction 4-methyl-5-(2-phosphooxyethyl)-thiazole + 4-amino-2-methyl-5-(diphosphooxymethyl)pyrimidine + H(+) = thiamine phosphate + diphosphate. The protein operates within cofactor biosynthesis; thiamine diphosphate biosynthesis; thiamine phosphate from 4-amino-2-methyl-5-diphosphomethylpyrimidine and 4-methyl-5-(2-phosphoethyl)-thiazole: step 1/1. Its function is as follows. Condenses 4-methyl-5-(beta-hydroxyethyl)thiazole monophosphate (THZ-P) and 2-methyl-4-amino-5-hydroxymethyl pyrimidine pyrophosphate (HMP-PP) to form thiamine monophosphate (TMP). The sequence is that of Thiamine-phosphate synthase from Staphylococcus aureus (strain MRSA252).